Here is a 110-residue protein sequence, read N- to C-terminus: Phosphoribosyl-AMP cyclohydrolase (110 aa).

Residue D80 coordinates Mg(2+). Residue C81 coordinates Zn(2+). 2 residues coordinate Mg(2+): D82 and D84. Positions 97 and 104 each coordinate Zn(2+).

Belongs to the PRA-CH family. Homodimer. Requires Mg(2+) as cofactor. Zn(2+) is required as a cofactor.

The protein localises to the cytoplasm. It carries out the reaction 1-(5-phospho-beta-D-ribosyl)-5'-AMP + H2O = 1-(5-phospho-beta-D-ribosyl)-5-[(5-phospho-beta-D-ribosylamino)methylideneamino]imidazole-4-carboxamide. It functions in the pathway amino-acid biosynthesis; L-histidine biosynthesis; L-histidine from 5-phospho-alpha-D-ribose 1-diphosphate: step 3/9. Its function is as follows. Catalyzes the hydrolysis of the adenine ring of phosphoribosyl-AMP. The chain is Phosphoribosyl-AMP cyclohydrolase from Clostridium botulinum (strain ATCC 19397 / Type A).